Consider the following 513-residue polypeptide: ATP synthase subunit alpha (513 aa).

169 to 176 (GDRQTGKT) serves as a coordination point for ATP.

The protein belongs to the ATPase alpha/beta chains family. F-type ATPases have 2 components, CF(1) - the catalytic core - and CF(0) - the membrane proton channel. CF(1) has five subunits: alpha(3), beta(3), gamma(1), delta(1), epsilon(1). CF(0) has three main subunits: a(1), b(2) and c(9-12). The alpha and beta chains form an alternating ring which encloses part of the gamma chain. CF(1) is attached to CF(0) by a central stalk formed by the gamma and epsilon chains, while a peripheral stalk is formed by the delta and b chains.

The protein resides in the cell inner membrane. It carries out the reaction ATP + H2O + 4 H(+)(in) = ADP + phosphate + 5 H(+)(out). Its function is as follows. Produces ATP from ADP in the presence of a proton gradient across the membrane. The alpha chain is a regulatory subunit. The polypeptide is ATP synthase subunit alpha (Idiomarina loihiensis (strain ATCC BAA-735 / DSM 15497 / L2-TR)).